We begin with the raw amino-acid sequence, 163 residues long: uncharacterized protein (163 aa).

This sequence belongs to the IMPDH/GMPR family.

This is an uncharacterized protein from Haemophilus influenzae (strain ATCC 51907 / DSM 11121 / KW20 / Rd).